The primary structure comprises 174 residues: NADH-ubiquinone oxidoreductase chain 6 (174 aa).

The next 6 membrane-spanning stretches (helical) occupy residues 1–21 (MTYA…GFSS), 24–44 (SPIY…AIIL), 47–67 (GGGY…MVVF), 86–106 (VEVL…VLWV), 111–131 (GMVV…EGEG), and 151–171 (WLVV…IEIA).

The protein belongs to the complex I subunit 6 family. Core subunit of respiratory chain NADH dehydrogenase (Complex I) which is composed of 45 different subunits.

It localises to the mitochondrion inner membrane. It catalyses the reaction a ubiquinone + NADH + 5 H(+)(in) = a ubiquinol + NAD(+) + 4 H(+)(out). Its function is as follows. Core subunit of the mitochondrial membrane respiratory chain NADH dehydrogenase (Complex I) which catalyzes electron transfer from NADH through the respiratory chain, using ubiquinone as an electron acceptor. Essential for the catalytic activity and assembly of complex I. The sequence is that of NADH-ubiquinone oxidoreductase chain 6 (MT-ND6) from Pan troglodytes (Chimpanzee).